Here is a 440-residue protein sequence, read N- to C-terminus: Asparagine--tRNA ligase (440 aa).

Belongs to the class-II aminoacyl-tRNA synthetase family. As to quaternary structure, homodimer.

It is found in the cytoplasm. The enzyme catalyses tRNA(Asn) + L-asparagine + ATP = L-asparaginyl-tRNA(Asn) + AMP + diphosphate + H(+). The chain is Asparagine--tRNA ligase from Roseiflexus castenholzii (strain DSM 13941 / HLO8).